A 209-amino-acid polypeptide reads, in one-letter code: Uracil phosphoribosyltransferase (209 aa).

Residues Arg-79, Arg-104, and 131-139 (DPMLATGGS) contribute to the 5-phospho-alpha-D-ribose 1-diphosphate site. Residues Ile-194 and 199-201 (GDA) each bind uracil. Asp-200 contacts 5-phospho-alpha-D-ribose 1-diphosphate.

This sequence belongs to the UPRTase family. It depends on Mg(2+) as a cofactor.

It catalyses the reaction UMP + diphosphate = 5-phospho-alpha-D-ribose 1-diphosphate + uracil. Its pathway is pyrimidine metabolism; UMP biosynthesis via salvage pathway; UMP from uracil: step 1/1. Its activity is regulated as follows. Allosterically activated by GTP. Functionally, catalyzes the conversion of uracil and 5-phospho-alpha-D-ribose 1-diphosphate (PRPP) to UMP and diphosphate. This Francisella tularensis subsp. novicida (strain U112) protein is Uracil phosphoribosyltransferase.